Here is a 354-residue protein sequence, read N- to C-terminus: Non-structural protein NS2 (354 aa).

2 disordered regions span residues 163–196 and 229–269; these read NERESAPRLQVQSVASREESRWMDDDEAKVDNEA and DERD…THIT. Basic and acidic residues-rich tracts occupy residues 178-196 and 237-249; these read SREESRWMDDDEAKVDNEA and DERGDEEQVKTLS. Residues 250–260 are compositionally biased toward acidic residues; it reads DDDDQGEDASD.

In terms of biological role, single-stranded RNA-binding protein. The sequence is that of Non-structural protein NS2 (Segment-8) from Bluetongue virus 17 (isolate USA) (BTV 17).